Consider the following 699-residue polypeptide: Chitin synthase 7 (699 aa).

Transmembrane regions (helical) follow at residues 19–39, 58–80, 98–118, 445–465, 474–494, and 507–527; these read IVGV…AAFL, SVVV…VVTL, LQWF…LFCI, FMQN…LAII, LPVG…IYFG, and VMFV…IFTA. Residues 628-648 form a disordered region; sequence AAGGSGEASEPGTRWAPDPRE.

It belongs to the chitin synthase family. Class VI subfamily.

It is found in the cell membrane. It carries out the reaction [(1-&gt;4)-N-acetyl-beta-D-glucosaminyl](n) + UDP-N-acetyl-alpha-D-glucosamine = [(1-&gt;4)-N-acetyl-beta-D-glucosaminyl](n+1) + UDP + H(+). In terms of biological role, polymerizes chitin, a structural polymer of the cell wall and septum, by transferring the sugar moiety of UDP-GlcNAc to the non-reducing end of the growing chitin polymer. Plays a role in cell wall integrity. Required to successfully penetrate the host plants and thus plays a key role in pathogenicity. The sequence is that of Chitin synthase 7 from Verticillium dahliae (strain VdLs.17 / ATCC MYA-4575 / FGSC 10137) (Verticillium wilt).